The primary structure comprises 79 residues: Eumenine mastoparan-OD (79 aa).

Residues 1–24 form the signal peptide; sequence MKQTIVIVLLAAVAMMACLQMVAA. AXPX repeat units lie at residues 24-27, 30-33, 44-47, 52-55, and 58-61; these read AEPL, AAPA, ASPI, ANPE, and ASPE. Residues 25–62 constitute a propeptide that is removed on maturation; it reads EPLPEAAPAPSPLAEAEALASPIAEALANPEALASPEA. Leu-76 carries the post-translational modification Leucine amide.

As to expression, expressed by the venom gland.

The protein localises to the secreted. It localises to the target cell membrane. In terms of biological role, antimicrobial peptide with strong activity against the fungi C.albicans (MIC=6 uM) and B.cinerea (MIC=10 uM), and weaker activity against the Gram-negative bacterium E.coli (MIC=97 uM) and Gram-positive bacterium S.aureus (MIC=97 uM). Shows cytolytic activity against insect cell lines. Has potent hemolytic activity against ovine erythrocytes (80% at 50 uM), but has no hemolytic activity against human erythrocytes. In vivo, peptide injection in the vicinity of the head and thorax of lepidopteran larvae induces feeding disorder that lasts one or two days before recovering. The chain is Eumenine mastoparan-OD from Orancistrocerus drewseni (Solitary wasp).